The sequence spans 806 residues: MIPVAEFKQFTEQQPAFKVLKPWWDVLAEYITYAMLMIGVFGCTLQVTQDKIICLPNHTSADVVSQITCQEFTQQSSASNDSDLETTVPPPTATSSPPREMSGLRNNLDLQQYSFINQMCYETALHWYAKYFPYLVVIHTLIFIICGNFWFKFPGTSSKIEHFISILGKCFDSPWTTRALSEVSGESSQEKPNQERSIDRELSKPNFEEGSPATADLPIPDKLVAETSSASALDKKEGEQAKALFEKVKKFRHHVEEGDLLYSMYMRQTVLKVCKFVLITIYNAVLVGKIHFIVPCSVHTEDMTGYNSFCCNHTKAHLFSKLAISYLCFLGVYGLTCFYTLYWLFRRPLKEYSFRSVREETGIGDIPDVKNDFAFVLHLVDQYDSLYSKRFAVFLSEVSESRLRQLNLNHEWPADKLRQKLQHTPEGRLELHLFKLPGLPDTVFEVAEMESLKLEMVNEALIPPLVSKLVRLEELSLLNCTAKVQHASMAYLRDHLRILQVKFDDIKEIPLWIFGLRALEELHLFGWLSQDLSKNPALESLRELKSLKVLTIKSNLSKIPATVADVAGHLQKFSIHNDGTKLLTLNALKRLVLVKELELVRCELERIPHAVFSLTNLQVLDLKENTLHTIEEIISLQHCRKLSVLRLWHNQIAYIPDHIRKLKGLEELSLNRNKILVIPSQLFLCNKLRHLDLSFNEIRELPPEIGVLQLLQYLGLSGNFLEDLPTELFFCQKLKTLKLGQNRLASLSPKVGSLVCLVKLELKGNRMDMLPPEIGNCLSLKRSGLNVESLLFDTLPVDVRDKFKED.

At 1 to 22 (MIPVAEFKQFTEQQPAFKVLKP) the chain is on the cytoplasmic side. Residues 23–43 (WWDVLAEYITYAMLMIGVFGC) form a helical membrane-spanning segment. Topologically, residues 44 to 130 (TLQVTQDKII…YETALHWYAK (87 aa)) are extracellular. A disulfide bridge connects residues Cys-54 and Cys-311. N-linked (GlcNAc...) asparagine glycans are attached at residues Asn-57 and Asn-80. Residues 75 to 104 (QSSASNDSDLETTVPPPTATSSPPREMSGL) form a disordered region. A helical membrane pass occupies residues 131–151 (YFPYLVVIHTLIFIICGNFWF). Residues 152-275 (KFPGTSSKIE…MRQTVLKVCK (124 aa)) lie on the Cytoplasmic side of the membrane. The interval 182 to 217 (EVSGESSQEKPNQERSIDRELSKPNFEEGSPATADL) is disordered. Positions 188–207 (SQEKPNQERSIDRELSKPNF) are enriched in basic and acidic residues. Residues 276–296 (FVLITIYNAVLVGKIHFIVPC) form a helical membrane-spanning segment. Over 297–323 (SVHTEDMTGYNSFCCNHTKAHLFSKLA) the chain is Extracellular. N-linked (GlcNAc...) asparagine glycosylation is present at Asn-312. The helical transmembrane segment at 324–344 (ISYLCFLGVYGLTCFYTLYWL) threads the bilayer. The Cytoplasmic segment spans residues 345–806 (FRRPLKEYSF…VDVRDKFKED (462 aa)). LRR repeat units lie at residues 569–589 (HLQKFSIHNDGTKLLTLNALK), 593–614 (LVKELELVRCELERIPHAVFSL), 616–637 (NLQVLDLKENTLHTIEEIISLQ), 641–662 (KLSVLRLWHNQIAYIPDHIRKL), 664–685 (GLEELSLNRNKILVIPSQLFLC), 687–708 (KLRHLDLSFNEIRELPPEIGVL), 710–731 (LLQYLGLSGNFLEDLPTELFFC), 733–754 (KLKTLKLGQNRLASLSPKVGSL), and 756–777 (CLVKLELKGNRMDMLPPEIGNC).

The protein belongs to the LRRC8 family. Heterohexamer; oligomerizes with other LRRC8 proteins (lrrc8a, lrrc8c, lrrc8d and/or lrrc8b) to form a heterohexamer. Detected in a channel complex that contains lrrc8a, lrrc8c and lrrc8e. In vivo, the subunit composition may depend primarily on expression levels, and heterooligomeric channels containing various proportions of the different LRRC8 proteins may coexist.

The protein localises to the cell membrane. It is found in the endoplasmic reticulum membrane. The protein resides in the lysosome membrane. The enzyme catalyses chloride(in) = chloride(out). It catalyses the reaction iodide(out) = iodide(in). The catalysed reaction is taurine(out) = taurine(in). It carries out the reaction 2',3'-cGAMP(out) = 2',3'-cGAMP(in). Non-essential component of the volume-regulated anion channel (VRAC, also named VSOAC channel), an anion channel required to maintain a constant cell volume in response to extracellular or intracellular osmotic changes. The VRAC channel conducts iodide better than chloride and can also conduct organic osmolytes like taurine. Mediates efflux of amino acids, such as aspartate, in response to osmotic stress. The VRAC channel also mediates transport of immunoreactive cyclic dinucleotide GMP-AMP (2'-3'-cGAMP), an immune messenger produced in response to DNA virus in the cytosol. Channel activity requires lrrc8a plus at least one other family member (lrrc8b, lrrc8c, lrrc8d or lrrc8e); channel characteristics depend on the precise subunit composition. Also plays a role in lysosome homeostasis by forming functional lysosomal VRAC channels in response to low cytoplasmic ionic strength condition: lysosomal VRAC channels are necessary for the formation of large lysosome-derived vacuoles, which store and then expel excess water to maintain cytosolic water homeostasis. The sequence is that of Volume-regulated anion channel subunit LRRC8E from Xenopus laevis (African clawed frog).